We begin with the raw amino-acid sequence, 552 residues long: Alcohol dehydrogenase [acceptor] (552 aa).

3–32 (DYIIVGAGSAGCVLANRLSADPSKRVCLLE) serves as a coordination point for FAD. H469 (proton acceptor) is an active-site residue.

The protein belongs to the GMC oxidoreductase family. FAD is required as a cofactor.

The protein localises to the cell inner membrane. It catalyses the reaction a primary alcohol + A = an aldehyde + AH2. Functionally, converts aliphatic medium-chain-length alcohols into aldehydes. May be linked to the electron transfer chain. In Pseudomonas putida (Arthrobacter siderocapsulatus), this protein is Alcohol dehydrogenase [acceptor] (alkJ).